The following is an 893-amino-acid chain: Desmocollin-1 (893 aa).

The first 29 residues, 1-29 (MAVASAAPGSIFWKQLLFSLLVLILFCDA), serve as a signal peptide directing secretion. The propeptide occupies 30-132 (CQKISLQVPS…KDAVLRRTKR (103 aa)). 5 consecutive Cadherin domains span residues 133–240 (RWAP…APYF), 241–352 (ENKL…APYF), 353–470 (TETS…GPEC), 471–574 (QPPV…DHPP), and 575–682 (QIKQ…LSRE). Residues 133 to 692 (RWAPIPCSLM…AALANVFLGK (560 aa)) are Extracellular-facing. N-linked (GlcNAc...) asparagine glycosylation is present at Asn163. The residue at position 383 (Thr383) is a Phosphothreonine. Asn398 and Asn545 each carry an N-linked (GlcNAc...) asparagine glycan. The chain crosses the membrane as a helical span at residues 693-715 (WAILAMVLGSVLLLCILFTCFCV). At 716 to 893 (TVKKTVKKCF…RTLAKTCVKK (178 aa)) the chain is on the cytoplasmic side.

As to quaternary structure, binds to JUP/plakoglobin. Post-translationally, isoform 1A is phosphorylated on a serine but isoform 1B is not. Epidermis and weakly in tongue papillae.

The protein localises to the cell membrane. Its subcellular location is the cell junction. The protein resides in the desmosome. In terms of biological role, a component of desmosome cell-cell junctions which are required for positive regulation of cellular adhesion. Required for desmosome adhesion strength between the granular layers of the epidermis, as a result moderates epidermal proliferation and differentiation. Is therefore required to maintain postnatal epidermal barrier function and normal hair follicle morphology into adulthood. This is Desmocollin-1 (DSC1) from Bos taurus (Bovine).